The chain runs to 366 residues: 4-hydroxy-3-methylbut-2-en-1-yl diphosphate synthase (flavodoxin) (366 aa).

The [4Fe-4S] cluster site is built by Cys-270, Cys-273, Cys-305, and Glu-312.

The protein belongs to the IspG family. [4Fe-4S] cluster is required as a cofactor.

The enzyme catalyses (2E)-4-hydroxy-3-methylbut-2-enyl diphosphate + oxidized [flavodoxin] + H2O + 2 H(+) = 2-C-methyl-D-erythritol 2,4-cyclic diphosphate + reduced [flavodoxin]. It functions in the pathway isoprenoid biosynthesis; isopentenyl diphosphate biosynthesis via DXP pathway; isopentenyl diphosphate from 1-deoxy-D-xylulose 5-phosphate: step 5/6. Converts 2C-methyl-D-erythritol 2,4-cyclodiphosphate (ME-2,4cPP) into 1-hydroxy-2-methyl-2-(E)-butenyl 4-diphosphate. The sequence is that of 4-hydroxy-3-methylbut-2-en-1-yl diphosphate synthase (flavodoxin) from Acidithiobacillus ferrooxidans (strain ATCC 53993 / BNL-5-31) (Leptospirillum ferrooxidans (ATCC 53993)).